The sequence spans 344 residues: Ribosomal RNA large subunit methyltransferase Cfr (344 aa).

Glu88 functions as the Proton acceptor in the catalytic mechanism. The region spanning 95 to 324 (KKGWESFCIS…HANGISVATR (230 aa)) is the Radical SAM core domain. An intrachain disulfide couples Cys102 to Cys335. Residues Cys109, Cys113, and Cys116 each coordinate [4Fe-4S] cluster. S-adenosyl-L-methionine contacts are provided by residues 155–156 (GE), Ser186, 209–211 (SLH), and Asn290. Cys335 (S-methylcysteine intermediate) is an active-site residue.

It belongs to the radical SAM superfamily. RlmN family. Cfr subfamily. The cofactor is [4Fe-4S] cluster.

It localises to the cytoplasm. It catalyses the reaction adenosine(2503) in 23S rRNA + 2 reduced [2Fe-2S]-[ferredoxin] + 2 S-adenosyl-L-methionine = 8-methyladenosine(2503) in 23S rRNA + 5'-deoxyadenosine + L-methionine + 2 oxidized [2Fe-2S]-[ferredoxin] + S-adenosyl-L-homocysteine. Its function is as follows. Specifically methylates position 8 of adenine 2503 in 23S rRNA. Confers resistance to some classes of antibiotics. This Lachnoclostridium phytofermentans (strain ATCC 700394 / DSM 18823 / ISDg) (Clostridium phytofermentans) protein is Ribosomal RNA large subunit methyltransferase Cfr.